The primary structure comprises 508 residues: Putative adenosylhomocysteinase 3 (508 aa).

The residue at position 4 (Ser-4) is a Phosphoserine. The interval 24 to 81 is disordered; that stretch reads DQKQEFNKRPTKIGRRSLSRSISQSSTDSYSSAASYTDSSDDETSPRDKQQKNSKGSS. The span at 32–41 shows a compositional bias: basic residues; sequence RPTKIGRRSL. The segment covering 42 to 61 has biased composition (low complexity); the sequence is SRSISQSSTDSYSSAASYTD. Phosphoserine occurs at positions 46, 49, 52, and 55. 3 residues coordinate substrate: Thr-133, Asp-207, and Glu-232. 233 to 235 contacts NAD(+); it reads SVT. Substrate is bound by residues Lys-262 and Asp-266. Residues Asn-267, 298 to 303, Glu-319, Asn-354, 375 to 377, and Asn-422 contribute to the NAD(+) site; these read GEVGKG and IGH.

This sequence belongs to the adenosylhomocysteinase family. Homotetramer. Forms heteromultimers with AHCYL1 (via the C-terminal region). Interacts with ITPR1; with lower affinity than AHCYL1 and maybe via ITPR1. Interacts with SLC4A4. Interacts with ZCCHC4. The cofactor is NAD(+).

It localises to the cytoplasm. It is found in the microsome. It carries out the reaction S-adenosyl-L-homocysteine + H2O = L-homocysteine + adenosine. It participates in amino-acid biosynthesis; L-homocysteine biosynthesis; L-homocysteine from S-adenosyl-L-homocysteine: step 1/1. In terms of biological role, may regulate the electrogenic sodium/bicarbonate cotransporter SLC4A4 activity and Mg(2+)-sensitivity. On the contrary of its homolog AHCYL1, does not regulate ITPR1 sensitivity to inositol 1,4,5-trisphosphate. This chain is Putative adenosylhomocysteinase 3 (AHCYL2), found in Pongo abelii (Sumatran orangutan).